The primary structure comprises 411 residues: Glutamate dehydrogenase 1 (411 aa).

Residue lysine 102 is part of the active site.

The protein belongs to the Glu/Leu/Phe/Val dehydrogenases family.

It carries out the reaction L-glutamate + NAD(+) + H2O = 2-oxoglutarate + NH4(+) + NADH + H(+). It catalyses the reaction L-glutamate + NADP(+) + H2O = 2-oxoglutarate + NH4(+) + NADPH + H(+). The chain is Glutamate dehydrogenase 1 (GDH1) from Arabidopsis thaliana (Mouse-ear cress).